A 375-amino-acid chain; its full sequence is Queuine tRNA-ribosyltransferase (375 aa).

Asp-90 (proton acceptor) is an active-site residue. Substrate contacts are provided by residues 90–94 (DSGGF), Asp-144, Gln-193, and Gly-220. The tract at residues 251–257 (GVGTPED) is RNA binding. Asp-270 serves as the catalytic Nucleophile. Residues 275–279 (TRNAR) are RNA binding; important for wobble base 34 recognition. The Zn(2+) site is built by Cys-308, Cys-310, Cys-313, and His-339.

Belongs to the queuine tRNA-ribosyltransferase family. As to quaternary structure, homodimer. Within each dimer, one monomer is responsible for RNA recognition and catalysis, while the other monomer binds to the replacement base PreQ1. Requires Zn(2+) as cofactor.

It catalyses the reaction 7-aminomethyl-7-carbaguanine + guanosine(34) in tRNA = 7-aminomethyl-7-carbaguanosine(34) in tRNA + guanine. Its pathway is tRNA modification; tRNA-queuosine biosynthesis. In terms of biological role, catalyzes the base-exchange of a guanine (G) residue with the queuine precursor 7-aminomethyl-7-deazaguanine (PreQ1) at position 34 (anticodon wobble position) in tRNAs with GU(N) anticodons (tRNA-Asp, -Asn, -His and -Tyr). Catalysis occurs through a double-displacement mechanism. The nucleophile active site attacks the C1' of nucleotide 34 to detach the guanine base from the RNA, forming a covalent enzyme-RNA intermediate. The proton acceptor active site deprotonates the incoming PreQ1, allowing a nucleophilic attack on the C1' of the ribose to form the product. After dissociation, two additional enzymatic reactions on the tRNA convert PreQ1 to queuine (Q), resulting in the hypermodified nucleoside queuosine (7-(((4,5-cis-dihydroxy-2-cyclopenten-1-yl)amino)methyl)-7-deazaguanosine). The polypeptide is Queuine tRNA-ribosyltransferase (Janthinobacterium sp. (strain Marseille) (Minibacterium massiliensis)).